Reading from the N-terminus, the 1379-residue chain is DNA-directed RNA polymerase subunit beta (1379 aa).

It belongs to the RNA polymerase beta chain family. As to quaternary structure, the RNAP catalytic core consists of 2 alpha, 1 beta, 1 beta' and 1 omega subunit. When a sigma factor is associated with the core the holoenzyme is formed, which can initiate transcription.

The catalysed reaction is RNA(n) + a ribonucleoside 5'-triphosphate = RNA(n+1) + diphosphate. Its function is as follows. DNA-dependent RNA polymerase catalyzes the transcription of DNA into RNA using the four ribonucleoside triphosphates as substrates. The sequence is that of DNA-directed RNA polymerase subunit beta from Rhizobium etli (strain ATCC 51251 / DSM 11541 / JCM 21823 / NBRC 15573 / CFN 42).